The sequence spans 384 residues: Urea transporter 1 (384 aa).

Residues 1-23 are disordered; it reads MDDNPTAVKLDQGGNQAPQGQGR. The next 5 helical transmembrane spans lie at 61–81, 85–105, 111–131, 138–158, and 169–189; these read ISQVVFVSNPISGILILVGLL, PWCALNGCVGTVVSTLTALLL, AITAGLQGYNATLVGILMAIY, FWWLLFPVSAMSMTCPIFSSA, and PVFTLPFNMALSMYLSATGHF. Asparagine 206 is a glycosylation site (N-linked (GlcNAc...) asparagine). 3 consecutive transmembrane segments (helical) span residues 237 to 257, 279 to 299, and 327 to 347; these read GGIFLGAILLSSPLMCLHAAI, GLWGFNSSLACIAIGGMFMAL, and VVGLPSCTWPFCLATLLFLLL.

It belongs to the urea transporter family. Homotrimer; each subunit contains a pore through which urea permeates. Identified in a complex with STOM.

It is found in the cell membrane. The protein resides in the basolateral cell membrane. The enzyme catalyses urea(in) = urea(out). Functionally, mediates the transport of urea driven by a concentration gradient across the cell membranes of erythrocytes and the renal inner medullary collecting duct which is critical to the urinary concentrating mechanism. Facilitates water transport in erythrocytes. This Ovis aries (Sheep) protein is Urea transporter 1 (SLC14A1).